Consider the following 902-residue polypeptide: Protein translocase subunit SecA (902 aa).

ATP-binding positions include Gln-87, Gly-105–Thr-109, and Asp-512. Disordered regions lie at residues Arg-565 to Ser-584 and Val-840 to Lys-902. Composition is skewed to basic and acidic residues over residues Val-840–Ala-859 and Gln-873–Arg-882. Positions 886, 888, 897, and 898 each coordinate Zn(2+). The segment covering Lys-892–Lys-902 has biased composition (basic residues).

Belongs to the SecA family. Monomer and homodimer. Part of the essential Sec protein translocation apparatus which comprises SecA, SecYEG and auxiliary proteins SecDF-YajC and YidC. It depends on Zn(2+) as a cofactor.

The protein resides in the cell inner membrane. It localises to the cytoplasm. It carries out the reaction ATP + H2O + cellular proteinSide 1 = ADP + phosphate + cellular proteinSide 2.. Part of the Sec protein translocase complex. Interacts with the SecYEG preprotein conducting channel. Has a central role in coupling the hydrolysis of ATP to the transfer of proteins into and across the cell membrane, serving both as a receptor for the preprotein-SecB complex and as an ATP-driven molecular motor driving the stepwise translocation of polypeptide chains across the membrane. The polypeptide is Protein translocase subunit SecA (Alteromonas mediterranea (strain DSM 17117 / CIP 110805 / LMG 28347 / Deep ecotype)).